The following is a 99-amino-acid chain: Aspartyl/glutamyl-tRNA(Asn/Gln) amidotransferase subunit C (99 aa).

Belongs to the GatC family. As to quaternary structure, heterotrimer of A, B and C subunits.

The catalysed reaction is L-glutamyl-tRNA(Gln) + L-glutamine + ATP + H2O = L-glutaminyl-tRNA(Gln) + L-glutamate + ADP + phosphate + H(+). The enzyme catalyses L-aspartyl-tRNA(Asn) + L-glutamine + ATP + H2O = L-asparaginyl-tRNA(Asn) + L-glutamate + ADP + phosphate + 2 H(+). Its function is as follows. Allows the formation of correctly charged Asn-tRNA(Asn) or Gln-tRNA(Gln) through the transamidation of misacylated Asp-tRNA(Asn) or Glu-tRNA(Gln) in organisms which lack either or both of asparaginyl-tRNA or glutaminyl-tRNA synthetases. The reaction takes place in the presence of glutamine and ATP through an activated phospho-Asp-tRNA(Asn) or phospho-Glu-tRNA(Gln). This is Aspartyl/glutamyl-tRNA(Asn/Gln) amidotransferase subunit C from Cupriavidus metallidurans (strain ATCC 43123 / DSM 2839 / NBRC 102507 / CH34) (Ralstonia metallidurans).